We begin with the raw amino-acid sequence, 367 residues long: Queuine tRNA-ribosyltransferase (367 aa).

Aspartate 92 serves as the catalytic Proton acceptor. Residues 92–96, aspartate 146, glutamine 188, and glycine 215 each bind substrate; that span reads DSGGF. The segment at 246–252 is RNA binding; it reads GVGTPKD. Aspartate 265 acts as the Nucleophile in catalysis. Positions 303, 305, 308, and 334 each coordinate Zn(2+).

The protein belongs to the queuine tRNA-ribosyltransferase family. In terms of assembly, homodimer. Within each dimer, one monomer is responsible for RNA recognition and catalysis, while the other monomer binds to the replacement base PreQ1. It depends on Zn(2+) as a cofactor.

The catalysed reaction is 7-aminomethyl-7-carbaguanine + guanosine(34) in tRNA = 7-aminomethyl-7-carbaguanosine(34) in tRNA + guanine. It functions in the pathway tRNA modification; tRNA-queuosine biosynthesis. Its function is as follows. Catalyzes the base-exchange of a guanine (G) residue with the queuine precursor 7-aminomethyl-7-deazaguanine (PreQ1) at position 34 (anticodon wobble position) in tRNAs with GU(N) anticodons (tRNA-Asp, -Asn, -His and -Tyr). Catalysis occurs through a double-displacement mechanism. The nucleophile active site attacks the C1' of nucleotide 34 to detach the guanine base from the RNA, forming a covalent enzyme-RNA intermediate. The proton acceptor active site deprotonates the incoming PreQ1, allowing a nucleophilic attack on the C1' of the ribose to form the product. After dissociation, two additional enzymatic reactions on the tRNA convert PreQ1 to queuine (Q), resulting in the hypermodified nucleoside queuosine (7-(((4,5-cis-dihydroxy-2-cyclopenten-1-yl)amino)methyl)-7-deazaguanosine). The protein is Queuine tRNA-ribosyltransferase of Francisella tularensis subsp. novicida (strain U112).